Here is a 198-residue protein sequence, read N- to C-terminus: FMN-dependent NADH:quinone oxidoreductase (198 aa).

FMN is bound by residues serine 10, 16 to 18 (SQS), 94 to 97 (MYNF), and 138 to 141 (TRGG).

This sequence belongs to the azoreductase type 1 family. In terms of assembly, homodimer. Requires FMN as cofactor.

It carries out the reaction 2 a quinone + NADH + H(+) = 2 a 1,4-benzosemiquinone + NAD(+). It catalyses the reaction N,N-dimethyl-1,4-phenylenediamine + anthranilate + 2 NAD(+) = 2-(4-dimethylaminophenyl)diazenylbenzoate + 2 NADH + 2 H(+). Functionally, quinone reductase that provides resistance to thiol-specific stress caused by electrophilic quinones. In terms of biological role, also exhibits azoreductase activity. Catalyzes the reductive cleavage of the azo bond in aromatic azo compounds to the corresponding amines. This Shewanella putrefaciens (strain CN-32 / ATCC BAA-453) protein is FMN-dependent NADH:quinone oxidoreductase.